We begin with the raw amino-acid sequence, 620 residues long: Chaperone protein HscA homolog (620 aa).

Belongs to the heat shock protein 70 family.

Functionally, chaperone involved in the maturation of iron-sulfur cluster-containing proteins. Has a low intrinsic ATPase activity which is markedly stimulated by HscB. In Pasteurella multocida (strain Pm70), this protein is Chaperone protein HscA homolog.